The following is a 67-amino-acid chain: Stomoxyn (67 aa).

A signal peptide spans 1 to 24 (MNFYKYLVVLVVLVLCLSATQTEA). At Thr66 the chain carries Threonine amide.

As to expression, constitutively expressed in the adult anterior midgut; proventriculus, thoracic and reservoir regions.

Its subcellular location is the secreted. In terms of biological role, has antimicrobial activity against most Gram-positive and Gram-negative bacteria, filamentous fungi and yeasts tested. Has trypanolytic effect on T.b.rhodesiense and limited hemolytic activity against bovine red blood cells. Its function is as follows. May play an important role in protecting the stored blood in the anterior midgut from microorganisms prior to digestion. Adopts an amphipathic alpha-helical structure only in the presence of an organic solvent that mimics a phospholipid membrane. This Stomoxys calcitrans (Stable fly) protein is Stomoxyn.